Here is a 217-residue protein sequence, read N- to C-terminus: GTP cyclohydrolase 1 (217 aa).

Zn(2+) contacts are provided by cysteine 109, histidine 112, and cysteine 180.

The protein belongs to the GTP cyclohydrolase I family. In terms of assembly, homomer.

It catalyses the reaction GTP + H2O = 7,8-dihydroneopterin 3'-triphosphate + formate + H(+). It participates in cofactor biosynthesis; 7,8-dihydroneopterin triphosphate biosynthesis; 7,8-dihydroneopterin triphosphate from GTP: step 1/1. This is GTP cyclohydrolase 1 from Aliivibrio salmonicida (strain LFI1238) (Vibrio salmonicida (strain LFI1238)).